The chain runs to 493 residues: Flagellin (493 aa).

The protein belongs to the bacterial flagellin family.

The protein localises to the secreted. The protein resides in the bacterial flagellum. In terms of biological role, flagellin is the subunit protein which polymerizes to form the filaments of bacterial flagella. The chain is Flagellin (fliC) from Salmonella rubislaw.